Here is a 570-residue protein sequence, read N- to C-terminus: Capsid vertex component 2 (570 aa).

Residues 1-54 form an interaction with major capsid protein/MCP region; sequence MALSGHVLIDPARLPRDTGPELMWAPSLRNSLRVSPEALELAEREAERARSERW. The tract at residues 102 to 123 is disordered; the sequence is QVRSPSTGGRSAPAPPSPSPAQ.

Belongs to the herpesviridae CVC2 protein family. Heterodimerizes with CVC1. Interacts with major capsid protein/MCP and triplex capsid protein 1/TRX1 at the pentamer vertices. Interacts with the large tegument protein/LTP.

The protein localises to the virion. Its subcellular location is the host nucleus. Its function is as follows. Capsid vertex-specific component that plays a role during viral DNA encapsidation, assuring correct genome cleavage and presumably stabilizing capsids that contain full-length viral genomes. Participates in the interaction between the capsid and the tegument through interaction with the large tegument protein/LTP. The polypeptide is Capsid vertex component 2 (Homo sapiens (Human)).